A 503-amino-acid polypeptide reads, in one-letter code: Glutamate/gamma-aminobutyrate antiporter (503 aa).

Position 33 to 43 (33 to 43 (LHLVFFLLLGG)) interacts with L-glutamate. A run of 7 helical transmembrane segments spans residues 35-55 (LVFFLLLGGLLWFLPVALCAA), 153-173 (FVVGIVIPSIILFGLAAAYFI), 194-214 (VSTLVVFVSFILAYMGVEASA), 232-252 (ILLVILAISLDAIGGFSVAAV), 366-386 (LTVVIYLVGYLLFFIGYFVLI), 407-427 (IIAGIGFLLSIFALFISFVPP), and 440-460 (MILLISFVVTAILPFIVYELH).

This sequence belongs to the amino acid-polyamine-organocation (APC) superfamily. Glutamate:GABA antiporter (GGA) (TC 2.A.3.7) family.

The protein localises to the cell membrane. The catalysed reaction is 4-aminobutanoate(in) + L-glutamate(out) = 4-aminobutanoate(out) + L-glutamate(in). Functionally, involved in glutaminase-dependent acid resistance. Exchanges extracellular glutamate (Glu) for intracellular gamma-aminobutyric acid (GABA) under acidic conditions. The sequence is that of Glutamate/gamma-aminobutyrate antiporter (gadC) from Lactococcus lactis subsp. lactis (strain IL1403) (Streptococcus lactis).